We begin with the raw amino-acid sequence, 216 residues long: Transmembrane protein 186 (216 aa).

Over 1 to 68 the chain is Mitochondrial matrix; the sequence is MAFLLRAVPR…IYRFNAIRAL (68 aa). A helical transmembrane segment spans residues 69 to 91; it reads GFLSRLKLAQTAVTVVALPPGFY. Residues 92-103 lie on the Mitochondrial intermembrane side of the membrane; that stretch reads CYSQGLMTLSSL. Residues 104–124 form a helical membrane-spanning segment; sequence GLMSGIASFALVMLCWMSHFF. The Mitochondrial matrix portion of the chain corresponds to 125 to 216; that stretch reads RRLVGILYVN…GTLATLKNSK (92 aa).

Belongs to the TMEM186 family. As to quaternary structure, part of the mitochondrial complex I assembly/MCIA complex that comprises at least the core subunits TMEM126B, NDUFAF1, ECSIT and ACAD9 and complement subunits such as COA1 and TMEM186. Interacts with MT-ND3.

The protein localises to the mitochondrion inner membrane. As part of the MCIA complex, required for efficient assembly of the mitochondrial complex I. This Rattus norvegicus (Rat) protein is Transmembrane protein 186.